Consider the following 269-residue polypeptide: Aquaporin-1 (269 aa).

The Cytoplasmic segment spans residues 1–11 (MASEIKKKLFW). A helical transmembrane segment spans residues 12 to 29 (RAVVAEFLAMTLFVFISI). Over 30–46 (GSALGFNYPLERNQTLV) the chain is Extracellular. The helical transmembrane segment at 47 to 65 (QDNVKVSLAFGLSIATLAQ) threads the bilayer. Topologically, residues 66-68 (SVG) are cytoplasmic. Residues 69-82 (HISGAHLNPAVTLG) lie within the membrane without spanning it. The NPA 1 signature appears at 76–78 (NPA). At 83 to 90 (LLLSCQIS) the chain is on the cytoplasmic side. A helical membrane pass occupies residues 91–109 (ILRAVMYIIAQCVGAIVAT). Topologically, residues 110–133 (AILSGITSSLVDNSLGRNDLAHGV) are extracellular. The chain crosses the membrane as a helical span at residues 134 to 153 (NSGQGLGIEIIGTLQLVLCV). Topologically, residues 154–163 (LATTDRRRRD) are cytoplasmic. Residues 164 to 181 (LGGSAPLAIGLSVALGHL) form a helical membrane-spanning segment. Residues 182–186 (LAIDY) lie on the Extracellular side of the membrane. The stretch at 187-199 (TGCGINPARSFGS) is an intramembrane region. The short motif at 192-194 (NPA) is the NPA 2 element. Residues 200-206 (AVLTRNF) are Extracellular-facing. Residue Asn205 is glycosylated (N-linked (GlcNAc...) asparagine). A helical membrane pass occupies residues 207–224 (SNHWIFWVGPFIGGALAV). At 225 to 269 (LIYDFILAPRSSDFTDRMKVWTSGQVEEYDLDADDINSRVEMKPK) the chain is on the cytoplasmic side. Ser247 carries the post-translational modification Phosphoserine. Tyr253 carries the phosphotyrosine modification. A Phosphoserine modification is found at Ser262.

Belongs to the MIP/aquaporin (TC 1.A.8) family. In terms of assembly, homotetramer; each monomer provides an independent water pore. Component of the ankyrin-1 complex in the erythrocyte, composed of ANK1, RHCE, RHAG, SLC4A1, EPB42, GYPA, GYPB and AQP1. Interacts with EPHB2; involved in endolymph production in the inner ear. Identified in a complex with STOM. Interacts (via the N-terminal) with ANK1 (via ANK 1-5 repeats). Interacts (via the C-terminal) with EPB42. Detected in erythrocytes (at protein level). In the kidney, expressed on luminal and basal borders of proximal tubules and in the thin limb of Henle's loop (at protein level).

The protein localises to the cell membrane. It carries out the reaction H2O(in) = H2O(out). The catalysed reaction is nitric oxide(out) = nitric oxide(in). It catalyses the reaction CO2(out) = CO2(in). The enzyme catalyses glycerol(in) = glycerol(out). It carries out the reaction H2O2(out) = H2O2(in). The catalysed reaction is K(+)(in) = K(+)(out). It catalyses the reaction Na(+)(in) = Na(+)(out). Functionally, forms a water channel that facilitates the transport of water across cell membranes, playing a crucial role in water homeostasis in various tissues. Could also be permeable to small solutes including hydrogen peroxide, glycerol and gases such as amonnia (NH3), nitric oxide (NO) and carbon dioxide (CO2). Recruited to the ankyrin-1 complex, a multiprotein complex of the erythrocyte membrane, it could be part of a CO2 metabolon, linking facilitated diffusion of CO2 across the membrane, anion exchange of Cl(-)/HCO3(-) and interconversion of dissolved CO2 and carbonic acid in the cytosol. In vitro, it shows non-selective gated cation channel activity and may be permeable to cations like K(+) and Na(+) in vivo. In Mus musculus (Mouse), this protein is Aquaporin-1.